The chain runs to 902 residues: Glutamate receptor 4 (902 aa).

Residues 1 to 20 (MRIICRQIVLLFSGFWGLAM) form the signal peptide. At 22 to 544 (AFPSSVQIGG…GVFSFLDPLA (523 aa)) the chain is on the extracellular side. Residues N52, N56, N258, N371, N407, and N414 are each glycosylated (N-linked (GlcNAc...) asparagine). C84 and C331 are oxidised to a cystine. 3 residues coordinate L-glutamate: P500, T502, and R507. The chain crosses the membrane as a helical span at residues 545 to 565 (YEIWMCIVFAYIGVSVVLFLV). Topologically, residues 566–592 (SRFSPYEWHTEEPEDGKEGPSDQPPNE) are cytoplasmic. Positions 593–608 (FGIFNSLWFSLGAFMQ) form an intramembrane region, helical; Pore-forming. An intramembrane segment occupies 609–611 (QGC). C611 is lipidated: S-palmitoyl cysteine. Residues 612–617 (DISPRS) are Cytoplasmic-facing. Residues 618-638 (LSGRIVGGVWWFFTLIIISSY) traverse the membrane as a helical segment. Residues 639-813 (TANLAAFLTV…DKTSALSLSN (175 aa)) are Extracellular-facing. Positions 676, 677, and 727 each coordinate L-glutamate. Cysteines 740 and 795 form a disulfide. The helical transmembrane segment at 814–834 (VAGVFYILVGGLGLAMLVALI) threads the bilayer. The Cytoplasmic segment spans residues 835 to 902 (EFCYKSRAEA…GLAVIASDLP (68 aa)). C837 carries S-palmitoyl cysteine lipidation. S862 carries the post-translational modification Phosphoserine.

This sequence belongs to the glutamate-gated ion channel (TC 1.A.10.1) family. GRIA4 subfamily. Homotetramer or heterotetramer of pore-forming glutamate receptor subunits. Tetramers may be formed by the dimerization of dimers. Interacts with EPB41L1 via its C-terminus. Isoform 3 interacts with PICK1. Found in a complex with GRIA1, GRIA2, GRIA3, CNIH2, CNIH3, CACNG2, CACNG3, CACNG4, CACNG5, CACNG7 and CACNG8. Interacts with CACNG5 and PRKCG. Found in a complex with GRIA1, GRIA2, GRIA3, DLG4, CACNG8 and CNIH2. Post-translationally, palmitoylated. Depalmitoylated upon L-glutamate stimulation. ZDHHC3/GODZ specifically palmitoylates Cys-611, which leads to Golgi retention and decreased cell surface expression. In contrast, Cys-837 palmitoylation does not affect cell surface expression but regulates stimulation-dependent endocytosis. Phosphorylated at Ser-862 by PRKCG; phosphorylation increases plasma membrane-associated GRI4 expression.

It is found in the cell membrane. The protein resides in the postsynaptic cell membrane. It localises to the cell projection. Its subcellular location is the dendrite. It carries out the reaction Ca(2+)(in) = Ca(2+)(out). It catalyses the reaction Na(+)(in) = Na(+)(out). The catalysed reaction is Mg(2+)(in) = Mg(2+)(out). Functionally, ionotropic glutamate receptor that functions as a ligand-gated cation channel, gated by L-glutamate and glutamatergic agonists such as alpha-amino-3-hydroxy-5-methyl-4-isoxazolepropionic acid (AMPA), quisqualic acid, and kainic acid. L-glutamate acts as an excitatory neurotransmitter at many synapses in the central nervous system and plays an important role in fast excitatory synaptic transmission. Binding of the excitatory neurotransmitter L-glutamate induces a conformation change, leading to the opening of the cation channel, and thereby converts the chemical signal to an electrical impulse upon entry of monovalent and divalent cations such as sodium and calcium. The receptor then desensitizes rapidly and enters a transient inactive state, characterized by the presence of bound agonist. In the presence of CACNG8, shows resensitization which is characterized by a delayed accumulation of current flux upon continued application of L-glutamate. This is Glutamate receptor 4 from Mus musculus (Mouse).